The chain runs to 191 residues: uncharacterized protein (191 aa).

One can recognise an HTH tetR-type domain in the interval 5–65 (GDSREKILHT…IEAVTYTGKI (61 aa)). Residues 28 to 47 (GLNQIVKESGAPKGSLYHFF) constitute a DNA-binding region (H-T-H motif).

This is an uncharacterized protein from Bacillus subtilis (strain 168).